The primary structure comprises 298 residues: Ribosomal RNA small subunit methyltransferase H (298 aa).

Residues 35–37 (GGH), D55, F82, D100, and Q107 each bind S-adenosyl-L-methionine.

Belongs to the methyltransferase superfamily. RsmH family.

It is found in the cytoplasm. It catalyses the reaction cytidine(1402) in 16S rRNA + S-adenosyl-L-methionine = N(4)-methylcytidine(1402) in 16S rRNA + S-adenosyl-L-homocysteine + H(+). Specifically methylates the N4 position of cytidine in position 1402 (C1402) of 16S rRNA. The chain is Ribosomal RNA small subunit methyltransferase H from Chlamydia felis (strain Fe/C-56) (Chlamydophila felis).